Reading from the N-terminus, the 356-residue chain is Neutral protease 2 homolog MEP5 (356 aa).

The first 19 residues, 1 to 19 (MRVSSSLIALAALAVQALA), serve as a signal peptide directing secretion. Residues 20-179 (LPVNELAERD…ASAIPELDKR (160 aa)) constitute a propeptide that is removed on maturation. Cystine bridges form between cysteine 187/cysteine 259 and cysteine 266/cysteine 284. Zn(2+) is bound at residue histidine 308. Glutamate 309 is an active-site residue. Zn(2+) is bound by residues histidine 312 and aspartate 323.

The protein belongs to the peptidase M35 family. Zn(2+) is required as a cofactor.

It localises to the secreted. The catalysed reaction is Preferential cleavage of bonds with hydrophobic residues in P1'. Also 3-Asn-|-Gln-4 and 8-Gly-|-Ser-9 bonds in insulin B chain.. Functionally, secreted metalloproteinase that allows assimilation of proteinaceous substrates. Shows high activities on basic nuclear substrates such as histone and protamine. May be involved in virulence. The chain is Neutral protease 2 homolog MEP5 (MEP5) from Coccidioides posadasii (strain C735) (Valley fever fungus).